Consider the following 380-residue polypeptide: Cytochrome b (380 aa).

4 helical membrane-spanning segments follow: residues Phe-33–Met-53, Trp-77–Ile-98, Trp-113–Leu-133, and Phe-178–Leu-198. 2 residues coordinate heme b: His-83 and His-97. His-182 and His-196 together coordinate heme b. An a ubiquinone-binding site is contributed by His-201. 4 helical membrane-spanning segments follow: residues Tyr-226–Thr-246, Leu-288–His-308, Val-320–Gly-340, and Tyr-347–Pro-367.

It belongs to the cytochrome b family. In terms of assembly, the cytochrome bc1 complex contains 3 respiratory subunits (MT-CYB, CYC1 and UQCRFS1), 2 core proteins (UQCRC1 and UQCRC2) and probably 6 low-molecular weight proteins. Heme b is required as a cofactor.

Its subcellular location is the mitochondrion inner membrane. Functionally, component of the ubiquinol-cytochrome c reductase complex (complex III or cytochrome b-c1 complex) that is part of the mitochondrial respiratory chain. The b-c1 complex mediates electron transfer from ubiquinol to cytochrome c. Contributes to the generation of a proton gradient across the mitochondrial membrane that is then used for ATP synthesis. The sequence is that of Cytochrome b (mt-cyb) from Pagrus major (Red sea bream).